Consider the following 422-residue polypeptide: Serine--tRNA ligase (422 aa).

238–240 lines the L-serine pocket; that stretch reads TSE. 269 to 271 is a binding site for ATP; it reads RKE. L-serine is bound at residue glutamate 292. 356–359 is a binding site for ATP; that stretch reads EISS. An L-serine-binding site is contributed by serine 390.

It belongs to the class-II aminoacyl-tRNA synthetase family. Type-1 seryl-tRNA synthetase subfamily. Homodimer. The tRNA molecule binds across the dimer.

It is found in the cytoplasm. It catalyses the reaction tRNA(Ser) + L-serine + ATP = L-seryl-tRNA(Ser) + AMP + diphosphate + H(+). The enzyme catalyses tRNA(Sec) + L-serine + ATP = L-seryl-tRNA(Sec) + AMP + diphosphate + H(+). The protein operates within aminoacyl-tRNA biosynthesis; selenocysteinyl-tRNA(Sec) biosynthesis; L-seryl-tRNA(Sec) from L-serine and tRNA(Sec): step 1/1. Catalyzes the attachment of serine to tRNA(Ser). Is also able to aminoacylate tRNA(Sec) with serine, to form the misacylated tRNA L-seryl-tRNA(Sec), which will be further converted into selenocysteinyl-tRNA(Sec). In Helicobacter hepaticus (strain ATCC 51449 / 3B1), this protein is Serine--tRNA ligase.